We begin with the raw amino-acid sequence, 410 residues long: Peptidase T (410 aa).

Zn(2+) is bound at residue His79. Asp81 is an active-site residue. Residue Asp142 participates in Zn(2+) binding. The Proton acceptor role is filled by Glu176. Zn(2+) is bound by residues Glu177, Asp199, and His381.

It belongs to the peptidase M20B family. Requires Zn(2+) as cofactor.

It is found in the cytoplasm. It carries out the reaction Release of the N-terminal residue from a tripeptide.. In terms of biological role, cleaves the N-terminal amino acid of tripeptides. This is Peptidase T from Bacillus velezensis (strain DSM 23117 / BGSC 10A6 / LMG 26770 / FZB42) (Bacillus amyloliquefaciens subsp. plantarum).